Here is a 292-residue protein sequence, read N- to C-terminus: MFTGSIVALVTPMDEKGNVSRSCLKKLIDYHVANGTSAIVSVGTTGESATLSHDEHGDVVMMTLELADGRIPVIAGTGANATAEAISLTQRFNDSGIVGCLTVTPYYNRPTQEGLFQHFKAIAEHTDLPQILYNVPSRTGCDMLPETVGRLAEIKNIIAIKEATGNLTRVHQIKELVSDDFILLSGDDASALDFMQLGGHGVISVTANVAARDMADMCKLAAEGQFAEARAINQRLMPLHNKLFVEPNPIPVKWACKALGLVATDTLRLPMTPITDHGRDIVKAALQHAGLL.

Position 45 (T45) interacts with pyruvate. The Proton donor/acceptor role is filled by Y133. The active-site Schiff-base intermediate with substrate is the K161. A pyruvate-binding site is contributed by I203.

Belongs to the DapA family. In terms of assembly, homotetramer; dimer of dimers.

The protein localises to the cytoplasm. The enzyme catalyses L-aspartate 4-semialdehyde + pyruvate = (2S,4S)-4-hydroxy-2,3,4,5-tetrahydrodipicolinate + H2O + H(+). Its pathway is amino-acid biosynthesis; L-lysine biosynthesis via DAP pathway; (S)-tetrahydrodipicolinate from L-aspartate: step 3/4. Catalyzes the condensation of (S)-aspartate-beta-semialdehyde [(S)-ASA] and pyruvate to 4-hydroxy-tetrahydrodipicolinate (HTPA). The polypeptide is 4-hydroxy-tetrahydrodipicolinate synthase (Salmonella typhi).